The sequence spans 840 residues: Mechanosensitive ion channel protein Msy2 (840 aa).

The Cytoplasmic segment spans residues M1–R68. The helical transmembrane segment at W69 to S89 threads the bilayer. Over P90–R100 the chain is Lumenal. A helical membrane pass occupies residues I101–I121. At A122–P126 the chain is on the cytoplasmic side. Residues Y127–L147 form a helical membrane-spanning segment. The Lumenal segment spans residues T148–E151. A helical membrane pass occupies residues M152–I172. The Cytoplasmic portion of the chain corresponds to G173–G225. A helical membrane pass occupies residues A226 to F246. At H247 to G449 the chain is on the lumenal side. The EF-hand domain maps to I392–E427. A helical transmembrane segment spans residues L450–A491. The Cytoplasmic segment spans residues Q492 to Y840. Disordered stretches follow at residues E677–D730 and E775–A819. Over residues S688 to S700 the composition is skewed to low complexity. Over residues S708 to D730 the composition is skewed to basic and acidic residues. Positions S776–A819 are enriched in low complexity.

It belongs to the MscS (TC 1.A.23) family.

The protein resides in the endoplasmic reticulum membrane. Functionally, regulates intracellular calcium levels and cell volume for survival in response to hypo-osmotic shock. Involved in maintaining vacuole integrity and protecting the nuclear envelope upon hypo-osmotic shock. This Schizosaccharomyces pombe (strain 972 / ATCC 24843) (Fission yeast) protein is Mechanosensitive ion channel protein Msy2.